The following is an 842-amino-acid chain: Glycogen phosphorylase, muscle form (842 aa).

An N-acetylserine modification is found at S2. Position 15 is a phosphoserine; by PHK; in form phosphorylase A (S15). D43 and Y76 together coordinate AMP. A phosphotyrosine mark is found at Y204 and Y227. Residue 310–319 coordinates AMP; that stretch reads RRFKSSKFGC. Phosphoserine is present on S430. The residue at position 473 (Y473) is a Phosphotyrosine. Residue S514 is modified to Phosphoserine. At K681 the chain carries N6-(pyridoxal phosphate)lysine. S747 and S748 each carry phosphoserine.

The protein belongs to the glycogen phosphorylase family. In terms of assembly, homodimer. Homotetramer; to form the enzymatically active phosphorylase A. Pyridoxal 5'-phosphate serves as cofactor. In terms of processing, phosphorylation of Ser-15 converts phosphorylase B (unphosphorylated) to phosphorylase A.

It catalyses the reaction [(1-&gt;4)-alpha-D-glucosyl](n) + phosphate = [(1-&gt;4)-alpha-D-glucosyl](n-1) + alpha-D-glucose 1-phosphate. With respect to regulation, allosterically regulated through the non-covalent binding of metabolites, being activated by AMP and inhibited by ATP, ADP, and glucose-6-phosphate. The activity is also controlled by post-translational modifications including phosphorylation. Allosteric enzyme that catalyzes the rate-limiting step in glycogen catabolism, the phosphorolytic cleavage of glycogen to produce glucose-1-phosphate, and plays a central role in maintaining cellular and organismal glucose homeostasis. The protein is Glycogen phosphorylase, muscle form of Macaca fascicularis (Crab-eating macaque).